The sequence spans 134 residues: Large ribosomal subunit protein bL20 (134 aa).

Belongs to the bacterial ribosomal protein bL20 family.

In terms of biological role, binds directly to 23S ribosomal RNA and is necessary for the in vitro assembly process of the 50S ribosomal subunit. It is not involved in the protein synthesizing functions of that subunit. The protein is Large ribosomal subunit protein bL20 of Brucella anthropi (strain ATCC 49188 / DSM 6882 / CCUG 24695 / JCM 21032 / LMG 3331 / NBRC 15819 / NCTC 12168 / Alc 37) (Ochrobactrum anthropi).